Here is a 461-residue protein sequence, read N- to C-terminus: Argininosuccinate lyase (461 aa).

This sequence belongs to the lyase 1 family. Argininosuccinate lyase subfamily.

The protein localises to the cytoplasm. The enzyme catalyses 2-(N(omega)-L-arginino)succinate = fumarate + L-arginine. The protein operates within amino-acid biosynthesis; L-arginine biosynthesis; L-arginine from L-ornithine and carbamoyl phosphate: step 3/3. With respect to regulation, strongly inhibited by L-arginine. Inhibitory effects are lowered at pH 7.0 compared to those at pH 8.0. At 45 degrees Celsius and pH 8.0, activity decreases to 94%, 74% and 37% in the presence of 0.6 mM, 2.8 mM and 10 mM arginine, respectively. Activity also decreases to 86% in the presence of 10 mM sodium succinate or sodium citrate. Activity does not decrease in the presence of 1 mM or 10 mM L-lysine, which has a similar structure to arginine. Catalyzes the last step of arginine biosynthesis, the conversion of argininosuccinate into L-arginine and fumarate. This Synechocystis sp. (strain ATCC 27184 / PCC 6803 / Kazusa) protein is Argininosuccinate lyase.